The primary structure comprises 250 residues: 5'-nucleotidase SurE (250 aa).

A divalent metal cation-binding residues include D8, D9, S39, and N95.

The protein belongs to the SurE nucleotidase family. A divalent metal cation serves as cofactor.

Its subcellular location is the cytoplasm. The catalysed reaction is a ribonucleoside 5'-phosphate + H2O = a ribonucleoside + phosphate. Functionally, nucleotidase that shows phosphatase activity on nucleoside 5'-monophosphates. The chain is 5'-nucleotidase SurE from Cupriavidus necator (strain ATCC 17699 / DSM 428 / KCTC 22496 / NCIMB 10442 / H16 / Stanier 337) (Ralstonia eutropha).